The sequence spans 426 residues: Eukaryotic translation initiation factor 3 subunit M (426 aa).

Positions 179-350 constitute a PCI domain; that stretch reads DDEDSYRYLI…KVFLVHRTTY (172 aa). The span at 385–401 shows a compositional bias: basic and acidic residues; it reads DVEGQREREQQELERKL. The interval 385–426 is disordered; it reads DVEGQREREQQELERKLAGAGMGGGPGGDRRRQQKPRTDEDD.

The protein belongs to the eIF-3 subunit M family. In terms of assembly, component of the eukaryotic translation initiation factor 3 (eIF-3) complex.

The protein localises to the cytoplasm. In terms of biological role, component of the eukaryotic translation initiation factor 3 (eIF-3) complex, which is involved in protein synthesis of a specialized repertoire of mRNAs and, together with other initiation factors, stimulates binding of mRNA and methionyl-tRNAi to the 40S ribosome. The eIF-3 complex specifically targets and initiates translation of a subset of mRNAs involved in cell proliferation. In Chaetomium globosum (strain ATCC 6205 / CBS 148.51 / DSM 1962 / NBRC 6347 / NRRL 1970) (Soil fungus), this protein is Eukaryotic translation initiation factor 3 subunit M.